Consider the following 331-residue polypeptide: Eukaryotic translation initiation factor 2 subunit 2 (331 aa).

2 disordered regions span residues 1 to 75 and 97 to 120; these read MSGD…DLNF and AIKD…LDIM. An N-acetylserine modification is found at serine 2. Phosphoserine is present on residues serine 2 and serine 13. Positions 13–22 are enriched in basic residues; that stretch reads SKKKKKKKKP. Position 36 is a phosphothreonine (threonine 36). A compositionally biased stretch (basic and acidic residues) spans 40–51; it reads ETKEVEPEPTEE. Position 67 is a phosphoserine (serine 67). Lysine 102 is covalently cross-linked (Glycyl lysine isopeptide (Lys-Gly) (interchain with G-Cter in SUMO2)). Phosphoserine is present on serine 105. The span at 106–118 shows a compositional bias: acidic residues; the sequence is DAQEPAEPEDDLD. 2 positions are modified to phosphoserine: serine 158 and serine 216. N6-acetyllysine occurs at positions 263 and 291. The C4-type zinc-finger motif lies at 279–303; sequence CHTCRSPDTILQKDTRLYFLQCETC.

It belongs to the eIF-2-beta/eIF-5 family. As to quaternary structure, eukaryotic translation initiation factor 2 eIF2 is a heterotrimeric complex composed of an alpha (EIF2S1), a beta (EIF2S2) and a gamma (EIF2S3) chain. eIF2 is member of the 43S pre-initiation complex (43S PIC). eIF2 forms a complex with at least CELF1/CUGBP1, CALR, CALR3, EIF2S1, EIF2S2, HSP90B1 and HSPA5. Interacts with BZW2/5MP1. Interacts with EIF5.

Its subcellular location is the cytoplasm. The protein localises to the cytosol. Its function is as follows. Component of the eIF2 complex that functions in the early steps of protein synthesis by forming a ternary complex with GTP and initiator tRNA. This complex binds to a 40S ribosomal subunit, followed by mRNA binding to form the 43S pre-initiation complex (43S PIC). Junction of the 60S ribosomal subunit to form the 80S initiation complex is preceded by hydrolysis of the GTP bound to eIF2 and release of an eIF2-GDP binary complex. In order for eIF2 to recycle and catalyze another round of initiation, the GDP bound to eIF2 must exchange with GTP by way of a reaction catalyzed by eIF2B. This chain is Eukaryotic translation initiation factor 2 subunit 2 (Eif2s2), found in Mus musculus (Mouse).